Here is a 204-residue protein sequence, read N- to C-terminus: High frequency lysogenization protein HflD homolog (204 aa).

This sequence belongs to the HflD family.

Its subcellular location is the cytoplasm. The protein localises to the cell inner membrane. This is High frequency lysogenization protein HflD homolog from Stenotrophomonas maltophilia (strain R551-3).